The following is a 365-amino-acid chain: Succinate--CoA ligase [ADP-forming] subunit beta (365 aa).

In terms of domain architecture, ATP-grasp spans 9–230 (KEIFRAEGIS…EMEEYEPEEF (222 aa)). ATP contacts are provided by residues Lys45, 52–54 (GRG), Glu90, Ile93, and Glu98. Positions 190 and 203 each coordinate Mg(2+). Substrate is bound by residues Asn244 and 300-302 (GIT).

Belongs to the succinate/malate CoA ligase beta subunit family. As to quaternary structure, heterotetramer of two alpha and two beta subunits. Mg(2+) serves as cofactor.

The catalysed reaction is succinate + ATP + CoA = succinyl-CoA + ADP + phosphate. It catalyses the reaction GTP + succinate + CoA = succinyl-CoA + GDP + phosphate. Its pathway is carbohydrate metabolism; tricarboxylic acid cycle; succinate from succinyl-CoA (ligase route): step 1/1. Succinyl-CoA synthetase functions in the citric acid cycle (TCA), coupling the hydrolysis of succinyl-CoA to the synthesis of either ATP or GTP and thus represents the only step of substrate-level phosphorylation in the TCA. The beta subunit provides nucleotide specificity of the enzyme and binds the substrate succinate, while the binding sites for coenzyme A and phosphate are found in the alpha subunit. In Methanothermobacter thermautotrophicus (strain ATCC 29096 / DSM 1053 / JCM 10044 / NBRC 100330 / Delta H) (Methanobacterium thermoautotrophicum), this protein is Succinate--CoA ligase [ADP-forming] subunit beta.